The primary structure comprises 245 residues: Ribonuclease 3 (245 aa).

The region spanning 17–146 (FAKKMNELGF…FVGALYLDQG (130 aa)) is the RNase III domain. Glutamate 59 provides a ligand contact to Mg(2+). Aspartate 63 is a catalytic residue. Residues aspartate 132 and glutamate 135 each contribute to the Mg(2+) site. The active site involves glutamate 135. In terms of domain architecture, DRBM spans 172–241 (DFKTQFQEYV…AESAYSKLKS (70 aa)). The disordered stretch occupies residues 217-245 (ATGQGKTKKESEQKAAESAYSKLKSNNNL).

The protein belongs to the ribonuclease III family. As to quaternary structure, homodimer. The cofactor is Mg(2+).

It is found in the cytoplasm. The enzyme catalyses Endonucleolytic cleavage to 5'-phosphomonoester.. Functionally, digests double-stranded RNA. Involved in the processing of primary rRNA transcript to yield the immediate precursors to the large and small rRNAs (23S and 16S). Processes some mRNAs, and tRNAs when they are encoded in the rRNA operon. Processes pre-crRNA and tracrRNA of type II CRISPR loci if present in the organism. In Staphylococcus haemolyticus (strain JCSC1435), this protein is Ribonuclease 3.